The following is a 269-amino-acid chain: Regulating synaptic membrane exocytosis protein 4 (269 aa).

A C2 domain is found at 115–233 (PMGDVEIGLQ…DLTTLAVGWY (119 aa)). Phosphoserine occurs at positions 254 and 257.

Binds PPFIA3. Does not bind RAB3.

The protein localises to the synapse. In terms of biological role, regulates synaptic membrane exocytosis. This Mus musculus (Mouse) protein is Regulating synaptic membrane exocytosis protein 4 (Rims4).